The following is an 823-amino-acid chain: ATP-dependent RNA helicase HrpA (823 aa).

Positions 16-179 (IKVLKNHNVL…FNNAPVVSIE (164 aa)) constitute a Helicase ATP-binding domain. An ATP-binding site is contributed by 29-36 (SPTGSGKT). Positions 126–129 (DEAH) match the DEAH box motif. The region spanning 203–374 (KIKEIVLNVI…EVVLRMADIG (172 aa)) is the Helicase C-terminal domain.

Belongs to the DEAD box helicase family. DEAH subfamily.

The catalysed reaction is ATP + H2O = ADP + phosphate + H(+). Has RNA-stimulated ATPase activity and RNA helicase activity. Involved in global regulation of gene expression. Could be involved in RNA processing and post-transcriptional gene regulation. Essential for both tick transmission and mouse infection. The polypeptide is ATP-dependent RNA helicase HrpA (Borreliella burgdorferi (strain ATCC 35210 / DSM 4680 / CIP 102532 / B31) (Borrelia burgdorferi)).